Reading from the N-terminus, the 752-residue chain is Microtubule-associated protein tau (752 aa).

Positions 1 to 567 (MAEPRQEFDT…PVPMPDLKNV (567 aa)) are disordered. N-acetylalanine is present on alanine 2. Phosphotyrosine is present on tyrosine 18. Lysine 33 participates in a covalent cross-link: Glycyl lysine isopeptide (Lys-Gly) (interchain with G-Cter in ubiquitin). Phosphoserine is present on residues serine 35 and serine 50. The span at 50 to 60 (SETSDAKSTPT) shows a compositional bias: polar residues. Residues threonine 58, threonine 60, and threonine 100 each carry the phosphothreonine modification. Residues 142–151 (SDWTHQQVPS) show a composition bias toward polar residues. Residues 173–182 (RPEDVERSHP) are compositionally biased toward basic and acidic residues. Serine 191 and serine 204 each carry phosphoserine. Residues 192-204 (PQKEAWGKDRLGS) show a composition bias toward basic and acidic residues. The span at 205 to 218 (EEEVDEDITMDESS) shows a compositional bias: acidic residues. A compositionally biased stretch (low complexity) spans 219–229 (QESPPSQASLA). Positions 233 to 252 (ATPQARSVSASGVSGETTSI) are enriched in polar residues. 2 stretches are compositionally biased toward basic and acidic residues: residues 289–313 (EEGH…KEQD) and 374–385 (SKDRTGNDEKKA). Polar residues-rich tracts occupy residues 387-400 (TSTP…SNRP) and 432-446 (KYVS…SPGT). At threonine 464 the chain carries Phosphothreonine. An Omega-N-methylarginine modification is found at arginine 466. An N6,N6-dimethyllysine; alternate modification is found at lysine 474. Residue lysine 474 is modified to N6-acetyllysine; alternate. Residues threonine 480, threonine 486, and threonine 487 each carry the phosphothreonine modification. Serine 489 is subject to Phosphoserine. Threonine 492 bears the Phosphothreonine mark. Residues serine 496, serine 502, and serine 506 each carry the phosphoserine modification. Positions 498–525 (EPPKSGERSGYSSPGSPGTPGSRSRTPS) are enriched in low complexity. The residue at position 508 (tyrosine 508) is a Phosphotyrosine. Phosphoserine is present on residues serine 509 and serine 510. At serine 513 the chain carries Phosphoserine; by CK1, PDPK1 and TTBK1. Residues threonine 516 and threonine 523 each carry the phosphothreonine modification. Phosphoserine is present on serine 525. Phosphothreonine is present on threonine 528. At lysine 536 the chain carries N6-acetyllysine. Position 542 is a phosphothreonine (threonine 542). A phosphoserine mark is found at serine 546 and serine 548. Tau/MAP repeat units follow at residues 555–585 (QTAP…GGGK), 586–616 (VQII…GGGS), 617–647 (VHIV…GGGQ), and 648–679 (VEVK…GGGN). Lysine 565 is covalently cross-linked (Glycyl lysine isopeptide (Lys-Gly) (interchain with G-Cter in ubiquitin)). N6-acetyllysine; alternate is present on lysine 570. N6-methyllysine; alternate is present on lysine 570. A Glycyl lysine isopeptide (Lys-Gly) (interchain with G-Cter in ubiquitin); alternate cross-link involves residue lysine 570. Serine 573 bears the Phosphoserine mark. Residue lysine 578 forms a Glycyl lysine isopeptide (Lys-Gly) (interchain with G-Cter in ubiquitin) linkage. An N6-acetyllysine; alternate modification is found at lysine 592. A Glycyl lysine isopeptide (Lys-Gly) (interchain with G-Cter in ubiquitin); alternate cross-link involves residue lysine 592. Phosphoserine is present on residues serine 596 and serine 600. N6-acetyllysine is present on lysine 601. A disulfide bridge links cysteine 602 with cysteine 633. Phosphoserine is present on serine 604. Lysine 609 carries the post-translational modification N6-acetyllysine; alternate. Residue lysine 609 forms a Glycyl lysine isopeptide (Lys-Gly) (interchain with G-Cter in ubiquitin); alternate linkage. Position 616 is a phosphoserine (serine 616). N6,N6-dimethyllysine; alternate is present on lysine 622. N6-acetyllysine; alternate occurs at positions 622, 628, and 632. Residues lysine 622, lysine 628, and lysine 632 each participate in a glycyl lysine isopeptide (Lys-Gly) (interchain with G-Cter in ubiquitin); alternate cross-link. Phosphoserine is present on serine 635. An N6-acetyllysine; alternate mark is found at lysine 642, lysine 654, and lysine 658. Residues lysine 642, lysine 654, and lysine 658 each participate in a glycyl lysine isopeptide (Lys-Gly) (interchain with G-Cter in ubiquitin); alternate cross-link. The residue at position 660 (arginine 660) is an Omega-N-methylarginine. Serine 663 carries the phosphoserine modification. Residue lysine 664 forms a Glycyl lysine isopeptide (Lys-Gly) (interchain with G-Cter in ubiquitin) linkage. The residue at position 667 (serine 667) is a Phosphoserine. Lysine 680 carries the N6-acetyllysine; alternate modification. Lysine 680 is covalently cross-linked (Glycyl lysine isopeptide (Lys-Gly) (interchain with G-Cter in ubiquitin); alternate). Residue lysine 686 forms a Glycyl lysine isopeptide (Lys-Gly) (interchain with G-Cter in ubiquitin) linkage. The residue at position 696 (lysine 696) is an N6-acetyllysine; alternate. Lysine 696 participates in a covalent cross-link: Glycyl lysine isopeptide (Lys-Gly) (interchain with G-Cter in ubiquitin); alternate. Residue tyrosine 705 is modified to Phosphotyrosine. Serine 707 carries the phosphoserine; by CK1 and PDPK1 modification. Serine 711 carries the phosphoserine modification. Threonine 714 carries the post-translational modification Phosphothreonine. The residue at position 715 (serine 715) is a Phosphoserine; by CK1 and PDPK1. Phosphoserine occurs at positions 720, 727, and 733. Threonine 738 carries the post-translational modification Phosphothreonine.

Interacts with MARK1, MARK2, MARK3 and MARK4. Interacts with SQSTM1 when polyubiquitinated. Interacts with PSMC2 through SQSTM1. Interacts with FKBP4. Binds to CSNK1D. Interacts with SGK1. Interacts with EPM2A; the interaction dephosphorylates MAPT at Ser-388. Interacts with PIN1. Interacts with LRRK2. Interacts with LRP1, leading to endocytosis; this interaction is reduced in the presence of LRPAP1/RAP. In terms of processing, polyubiquitinated. Requires functional TRAF6 and may provoke SQSTM1-dependent degradation by the proteasome. Phosphorylated at various serine and threonine residues in S-P or T-P motifs by proline-directed protein kinases (PDPK1, CDK1, CDK5, GSK3, MAPK) (a few sites per protein in interphase, more in mitosis), and at serine residues in K-X-G-S motifs by MAP/microtubule affinity-regulating kinase (MARK1, MARK2, MARK3, MARK4), causing detachment from microtubules, and their disassembly. Fetal Tau is much more phosphorylated than adult Tau. Phosphorylation at Ser-573 by BRSK1 and BRSK2 in neurons affects ability to bind microtubules and plays a role in neuron polarization. Phosphorylated by PHK. Dephosphorylation at several serine and threonine residues by the serine/threonine phosphatase PPP5C. Phosphorylation at Ser-204 by SGK1 mediates microtubule depolymerization and neurite formation in hippocampal neurons. Expressed in neurons. The larger forms (isoform tau-A and isoform tau-B) are preferentially expressed in the peripheral nervous system while the other are expressed in the central nervous system. Low amounts of the larger forms are also found in limited areas of the CNS.

The protein localises to the cytoplasm. The protein resides in the cytosol. It is found in the cell membrane. Its subcellular location is the cytoskeleton. It localises to the cell projection. The protein localises to the axon. The protein resides in the dendrite. It is found in the secreted. Promotes microtubule assembly and stability, and might be involved in the establishment and maintenance of neuronal polarity. The C-terminus binds axonal microtubules while the N-terminus binds neural plasma membrane components, suggesting that tau functions as a linker protein between both. Axonal polarity is predetermined by tau localization (in the neuronal cell) in the domain of the cell body defined by the centrosome. The short isoforms allow plasticity of the cytoskeleton whereas the longer isoforms may preferentially play a role in its stabilization. This chain is Microtubule-associated protein tau, found in Rattus norvegicus (Rat).